The primary structure comprises 210 residues: Small ribosomal subunit protein uS3 (210 aa).

The KH type-2 domain maps to 38-106 (IRAFLKKRLY…EIFINIIEVR (69 aa)).

The protein belongs to the universal ribosomal protein uS3 family. As to quaternary structure, part of the 30S ribosomal subunit. Forms a tight complex with proteins S10 and S14.

Functionally, binds the lower part of the 30S subunit head. Binds mRNA in the 70S ribosome, positioning it for translation. This Pelobacter propionicus (strain DSM 2379 / NBRC 103807 / OttBd1) protein is Small ribosomal subunit protein uS3.